The chain runs to 417 residues: RH-like protein (417 aa).

The next 11 membrane-spanning stretches (helical) occupy residues 12 to 32 (CLPL…FFFT), 44 to 64 (LVAS…GLGF), 77 to 97 (VAFN…LDGF), 125 to 145 (ISMN…MELV), 172 to 192 (IHVF…KPLP), 203 to 223 (TSPS…WPTF), 238 to 258 (VFST…VSSL), 265 to 285 (INMT…SASC), 287 to 307 (VIHS…ISIG), 331 to 351 (TFGL…ALRV), and 358 to 378 (MIGF…AMSI).

The protein belongs to the ammonium transporter (TC 2.A.49) family. Rh subfamily.

The protein localises to the membrane. Functionally, may be part of an oligomeric complex which is likely to have a transport or channel function in the erythrocyte membrane. The chain is RH-like protein from Macaca mulatta (Rhesus macaque).